Consider the following 259-residue polypeptide: Phosphatidylglycerol--prolipoprotein diacylglyceryl transferase (259 aa).

The next 4 helical transmembrane spans lie at 12 to 32 (LSLHWYAVCILVGLLLAVYLA), 46 to 66 (IIDFILIAFPLAIIGARIYYV), 83 to 103 (IWNGGIAIYGGLITGTIVLFV), and 109 to 129 (VLNPIHFLDIAAPSVMLAQAI). R131 contributes to the a 1,2-diacyl-sn-glycero-3-phospho-(1'-sn-glycerol) binding site. The next 3 membrane-spanning stretches (helical) occupy residues 167-187 (VPTFLYESMWNLIGFVIIMVW), 194-214 (LLDGDIISFYLIWYGCGRLVI), and 226-246 (GIRVSQYVSVLLIIIAIVFIF).

This sequence belongs to the Lgt family.

The protein resides in the cell membrane. The catalysed reaction is L-cysteinyl-[prolipoprotein] + a 1,2-diacyl-sn-glycero-3-phospho-(1'-sn-glycerol) = an S-1,2-diacyl-sn-glyceryl-L-cysteinyl-[prolipoprotein] + sn-glycerol 1-phosphate + H(+). It functions in the pathway protein modification; lipoprotein biosynthesis (diacylglyceryl transfer). Functionally, catalyzes the transfer of the diacylglyceryl group from phosphatidylglycerol to the sulfhydryl group of the N-terminal cysteine of a prolipoprotein, the first step in the formation of mature lipoproteins. The sequence is that of Phosphatidylglycerol--prolipoprotein diacylglyceryl transferase from Streptococcus equi subsp. zooepidemicus (strain H70).